The following is a 488-amino-acid chain: MTMTTPLADAMSQLVIYDSLTGRKQAFKPLATGKVGMYVCGMTVYDYCHIGHARVMVGFDMAVRWLAQLGYDVNYVRNITDIDDKIITRAAENGEEIGTLTQRFITAMHEDATALGCLSPDAEPRATDHIDEMQQMIETLVSNDYAYAGDNGDVYYAVDSFADYGKLSKRNLDDMQAGSRVEVENDKRNPFDFVLWKAAKPDEPQWASAWGQGRPGWHIECSAMSTKCLGNTFDIHGGGHDLQFPHHENEIAQSEAATGCEYARNWMHVGFINVDGEKMSKSLGNFFTIRDVMAKYLPETVRFFLLSSHYRSQVNFSDSALDESHNSLSRLYQALKVAEQQKGKVLIIDEALINNAYASAVGQDFIKAMNDDFNSSTAISVLFGLARDINKASKAQDVETAWQLAQHLKALAQTLNILQQPVQQFLQAVIGEVAEDSLTDEAIDGLIIERADAKTNKNFARADEIRVQLKEAGIELEDSRAGTTWRRA.

C40 provides a ligand contact to Zn(2+). Residues 42–52 carry the 'HIGH' region motif; it reads MTVYDYCHIGH. The Zn(2+) site is built by C221, H246, and E250. A 'KMSKS' region motif is present at residues 278 to 282; it reads KMSKS. K281 serves as a coordination point for ATP.

The protein belongs to the class-I aminoacyl-tRNA synthetase family. As to quaternary structure, monomer. Requires Zn(2+) as cofactor.

The protein localises to the cytoplasm. It carries out the reaction tRNA(Cys) + L-cysteine + ATP = L-cysteinyl-tRNA(Cys) + AMP + diphosphate. The polypeptide is Cysteine--tRNA ligase (Psychrobacter cryohalolentis (strain ATCC BAA-1226 / DSM 17306 / VKM B-2378 / K5)).